Here is a 599-residue protein sequence, read N- to C-terminus: UvrABC system protein C (599 aa).

The 79-residue stretch at 15 to 93 (PCPGVYRMLD…IKALQPRYNV (79 aa)) folds into the GIY-YIG domain. Residues 202 to 237 (QQVINELVIRMEEASGQLAFEQAAYYRDRIASLRQI) form the UVR domain.

Belongs to the UvrC family. In terms of assembly, interacts with UvrB in an incision complex.

Its subcellular location is the cytoplasm. The UvrABC repair system catalyzes the recognition and processing of DNA lesions. UvrC both incises the 5' and 3' sides of the lesion. The N-terminal half is responsible for the 3' incision and the C-terminal half is responsible for the 5' incision. In Nitrosococcus oceani (strain ATCC 19707 / BCRC 17464 / JCM 30415 / NCIMB 11848 / C-107), this protein is UvrABC system protein C.